A 460-amino-acid chain; its full sequence is Retinoic acid receptor alpha (460 aa).

The segment at 1–87 (MASNSSSCPT…PPPLPRIYKP (87 aa)) is modulating. Positions 46–78 (HQLPVSGYSTPSPATVETQSTSSEEIVPSPPSP) are disordered. Polar residues predominate over residues 52–69 (GYSTPSPATVETQSTSSE). 2 NR C4-type zinc fingers span residues 88-108 (CFVC…CEGC) and 124-148 (CHRD…LQKC). The nuclear receptor DNA-binding region spans 88–153 (CFVCQDKSSG…RLQKCFEVGM (66 aa)). The hinge stretch occupies residues 154 to 182 (SKESVRNDRNKKKKDVPKTECSESYIVTP). The NR LBD domain maps to 183–417 (EVEELIEKVR…PLIQEMLENS (235 aa)). The 9aaTAD signature appears at 408–416 (PLIQEMLEN). Positions 418-460 (EGMDTLGGQPGGPRTGGLGPPPGSCSPSLSPSSTRSSPATHSP) are disordered. Residues 425 to 435 (GQPGGPRTGGL) show a composition bias toward gly residues. Residues 442–460 (CSPSLSPSSTRSSPATHSP) show a composition bias toward low complexity.

It belongs to the nuclear hormone receptor family. NR1 subfamily. As to quaternary structure, heterodimer; with an RXR molecule. Binds DNA preferentially as a RAR/RXR heterodimer. Ubiquitous.

It localises to the nucleus. Receptor for retinoic acid. Retinoic acid receptors bind as heterodimers to their target response elements in response to their ligands, all-trans or 9-cis retinoic acid, and regulate gene expression in various biological processes. The RAR/RXR heterodimers bind to the retinoic acid response elements (RARE) composed of tandem 5'-AGGTCA-3' sites known as DR1-DR5. Required for hindbrain patterning and appears to be required for skin development. This chain is Retinoic acid receptor alpha (RARA), found in Gallus gallus (Chicken).